Reading from the N-terminus, the 176-residue chain is Oligoribonuclease (176 aa).

The Exonuclease domain maps to 2 to 159; the sequence is EMTGLNPETD…DDILESIEEM (158 aa). Y117 is a catalytic residue.

The protein belongs to the oligoribonuclease family.

It localises to the cytoplasm. Functionally, 3'-to-5' exoribonuclease specific for small oligoribonucleotides. The protein is Oligoribonuclease of Neisseria gonorrhoeae (strain ATCC 700825 / FA 1090).